The following is a 257-amino-acid chain: Trans-aconitate 2-methyltransferase (257 aa).

The protein belongs to the methyltransferase superfamily. Tam family.

Its subcellular location is the cytoplasm. The catalysed reaction is trans-aconitate + S-adenosyl-L-methionine = (E)-3-(methoxycarbonyl)pent-2-enedioate + S-adenosyl-L-homocysteine. Its function is as follows. Catalyzes the S-adenosylmethionine monomethyl esterification of trans-aconitate. The sequence is that of Trans-aconitate 2-methyltransferase from Sinorhizobium fredii (strain NBRC 101917 / NGR234).